Consider the following 460-residue polypeptide: Squalene synthase (460 aa).

Residues 425–445 (ISILFVFFIILVCLAVIFYVF) form a helical membrane-spanning segment.

The protein belongs to the phytoene/squalene synthase family. Interacts with pof14. The cofactor is Mg(2+).

Its subcellular location is the endoplasmic reticulum membrane. The catalysed reaction is 2 (2E,6E)-farnesyl diphosphate + NADPH + H(+) = squalene + 2 diphosphate + NADP(+). The enzyme catalyses 2 (2E,6E)-farnesyl diphosphate + NADH + H(+) = squalene + 2 diphosphate + NAD(+). The protein operates within terpene metabolism; lanosterol biosynthesis; lanosterol from farnesyl diphosphate: step 1/3. It participates in steroid metabolism; ergosterol biosynthesis. In terms of biological role, squalene synthase; part of the third module of ergosterol biosynthesis pathway that includes by the late steps of the pathway. Erg9 produces squalene from 2 farnesyl pyrophosphate moieties. The third module or late pathway involves the ergosterol synthesis itself through consecutive reactions that mainly occur in the endoplasmic reticulum (ER) membrane. Firstly, the squalene synthase erg9 catalyzes the condensation of 2 farnesyl pyrophosphate moieties to form squalene, which is the precursor of all steroids. Secondly, squalene is converted into lanosterol by the consecutive action of the squalene epoxidase erg1 and the lanosterol synthase erg7. The lanosterol 14-alpha-demethylase erg11/cyp1 catalyzes C14-demethylation of lanosterol to produce 4,4'-dimethyl cholesta-8,14,24-triene-3-beta-ol. In the next steps, a complex process involving various demethylation, reduction and desaturation reactions catalyzed by the C-14 reductase erg24 and the C-4 demethylation complex erg25-erg26-erg27 leads to the production of zymosterol. Erg28 likely functions in the C-4 demethylation complex reaction by tethering erg26 and Erg27 to the endoplasmic reticulum or to facilitate interaction between these proteins. Then, the sterol 24-C-methyltransferase erg6 catalyzes the methyl transfer from S-adenosyl-methionine to the C-24 of zymosterol to form fecosterol. The C-8 sterol isomerase erg2 catalyzes the reaction which results in unsaturation at C-7 in the B ring of sterols and thus converts fecosterol to episterol. The sterol-C5-desaturases erg31 and erg32 then catalyze the introduction of a C-5 double bond in the B ring to produce 5-dehydroepisterol. The C-22 sterol desaturase erg5 further converts 5-dehydroepisterol into ergosta-5,7,22,24(28)-tetraen-3beta-ol by forming the C-22(23) double bond in the sterol side chain. Finally, ergosta-5,7,22,24(28)-tetraen-3beta-ol is substrate of the C-24(28) sterol reductase erg4 to produce ergosterol. In the genus Schizosaccharomyces, a second route exists between lanosterol and fecosterol, via the methylation of lanosterol to eburicol by erg6, followed by C14-demethylation by erg11/cyp1 and C4-demethylation by the demethylation complex erg25-erg26-erg27. This Schizosaccharomyces pombe (strain 972 / ATCC 24843) (Fission yeast) protein is Squalene synthase.